The sequence spans 78 residues: Small, acid-soluble spore protein Tlp (78 aa).

The interval 32–78 is disordered; that stretch reads SEEQLSFASEAEQEQIREKNERRNESIEAMRNEIHDEAEARKNGYHQ. Over residues 45–78 the composition is skewed to basic and acidic residues; it reads EQIREKNERRNESIEAMRNEIHDEAEARKNGYHQ.

This sequence belongs to the Tlp family.

It is found in the spore core. This Bacillus licheniformis (strain ATCC 14580 / DSM 13 / JCM 2505 / CCUG 7422 / NBRC 12200 / NCIMB 9375 / NCTC 10341 / NRRL NRS-1264 / Gibson 46) protein is Small, acid-soluble spore protein Tlp.